Reading from the N-terminus, the 710-residue chain is U3 small nucleolar RNA-associated protein 4 (710 aa).

WD repeat units follow at residues 11–59 (YTPS…CLKT), 64–105 (GVDR…PLVN), 108–147 (SNAG…GVIE), 154–192 (RQTS…SAII), 199–241 (RARK…LSQS), 290–327 (FHSH…RQFN), 328–365 (RKNH…LWRI), 488–527 (SMCD…YSEL), and 529–569 (RVNT…LSEW).

Component of the ribosomal small subunit (SSU) processome.

It localises to the nucleus. It is found in the nucleolus. Its function is as follows. Involved in nucleolar processing of pre-18S ribosomal RNA. Required for optimal pre-ribosomal RNA transcription by RNA polymerase I together with a subset of U3 proteins required for transcription (t-UTPs). The sequence is that of U3 small nucleolar RNA-associated protein 4 (utp4) from Schizosaccharomyces pombe (strain 972 / ATCC 24843) (Fission yeast).